The following is a 347-amino-acid chain: Tyrosine recombinase XerC 2 (347 aa).

The 92-residue stretch at 17–108 (LVLTRYMEAH…PLKTWFKWLA (92 aa)) folds into the Core-binding (CB) domain. The Tyr recombinase domain occupies 125 to 313 (KLPKHLPRAI…SIEHLRAIHD (189 aa)). Active-site residues include Arg170, Lys195, His265, Arg268, and His291. The O-(3'-phospho-DNA)-tyrosine intermediate role is filled by Tyr300.

Belongs to the 'phage' integrase family.

It localises to the cytoplasm. Its function is as follows. Site-specific tyrosine recombinase, which acts by catalyzing the cutting and rejoining of the recombining DNA molecules. The sequence is that of Tyrosine recombinase XerC 2 from Ralstonia nicotianae (strain ATCC BAA-1114 / GMI1000) (Ralstonia solanacearum).